The following is a 219-amino-acid chain: GTP-binding protein Rab-3D (219 aa).

Ala-2 is modified (N-acetylalanine). 29-37 serves as a coordination point for GDP; that stretch reads GNSSVGKTS. GTP is bound by residues Ser-31, Ser-32, Val-33, Gly-34, Lys-35, Thr-36, Ser-37, Pro-49, and Ser-53. Mg(2+) is bound at residue Thr-36. The short motif at 49 to 58 is the Switch 1 element; sequence PAFVSTVGID. 2 residues coordinate Mg(2+): Thr-54 and Asp-77. Gly-80 is a binding site for GTP. Positions 80–96 match the Switch 2 motif; the sequence is GQERYRTITTAYYRGAM. At Thr-86 the chain carries Phosphothreonine. Residues Asn-135, Lys-136, Asp-138, Ala-166, and Lys-167 each contribute to the GTP site. Residues 135–138 and 165–167 contribute to the GDP site; these read NKCD and SAK. Ser-190 bears the Phosphoserine mark. A disordered region spans residues 190–219; that stretch reads SLEPSSSPGSNGKGPALGDTPPPQPSSCGC. The span at 193–203 shows a compositional bias: low complexity; it reads PSSSPGSNGKG. Pro residues predominate over residues 209-219; it reads TPPPQPSSCGC. Residues Cys-217 and Cys-219 are each lipidated (S-geranylgeranyl cysteine). A Cysteine methyl ester; partial modification is found at Cys-219.

It belongs to the small GTPase superfamily. Rab family. Interacts with RIMS1, RIMS2, RPH3A and RPH3AL. Interacts with RAB3IP. The GTP-bound form interacts with REP15. Interacts with CHM; phosphorylation at Thr-86 disrupts this interaction. Interacts with MADD (via uDENN domain); the GTP-bound form is preferred for interaction. It depends on Mg(2+) as a cofactor. Post-translationally, in fetal glands the majority of the proteins are methylated, whereas in neonatal and adult glands, only 50% are methylated. Phosphorylation of Thr-86 in the switch II region by LRRK2 prevents the association of RAB regulatory proteins, including CHM. Highest levels found in lung.

Its subcellular location is the cell membrane. The catalysed reaction is GTP + H2O = GDP + phosphate + H(+). With respect to regulation, regulated by guanine nucleotide exchange factors (GEFs) which promote the exchange of bound GDP for free GTP. Regulated by GTPase activating proteins (GAPs) which increase the GTP hydrolysis activity. Inhibited by GDP dissociation inhibitors (GDIs) which prevent Rab-GDP dissociation. In terms of biological role, the small GTPases Rab are key regulators of intracellular membrane trafficking, from the formation of transport vesicles to their fusion with membranes. Rabs cycle between an inactive GDP-bound form and an active GTP-bound form that is able to recruit to membranes different sets of downstream effectors directly responsible for vesicle formation, movement, tethering and fusion. RAB3D may be involved in the insulin-induced exocytosis of GLUT4-containing vesicles in adipocytes. This chain is GTP-binding protein Rab-3D, found in Rattus norvegicus (Rat).